A 447-amino-acid polypeptide reads, in one-letter code: N-succinylarginine dihydrolase (447 aa).

Residues 19–28, asparagine 110, and 137–138 contribute to the substrate site; these read AGLSFGNEAS and HR. Residue glutamate 174 is part of the active site. Residue arginine 212 participates in substrate binding. Histidine 248 is a catalytic residue. Positions 250 and 359 each coordinate substrate. Cysteine 365 serves as the catalytic Nucleophile.

This sequence belongs to the succinylarginine dihydrolase family. As to quaternary structure, homodimer.

It catalyses the reaction N(2)-succinyl-L-arginine + 2 H2O + 2 H(+) = N(2)-succinyl-L-ornithine + 2 NH4(+) + CO2. Its pathway is amino-acid degradation; L-arginine degradation via AST pathway; L-glutamate and succinate from L-arginine: step 2/5. Its function is as follows. Catalyzes the hydrolysis of N(2)-succinylarginine into N(2)-succinylornithine, ammonia and CO(2). This is N-succinylarginine dihydrolase from Citrobacter koseri (strain ATCC BAA-895 / CDC 4225-83 / SGSC4696).